An 846-amino-acid polypeptide reads, in one-letter code: Disrupted in schizophrenia 1 homolog (846 aa).

Disordered regions lie at residues 1–53 (MQGA…IGFL), 127–147 (HSGV…GDSG), 231–257 (EAEP…GEPR), 277–312 (TRSN…QDGG), and 409–436 (LHGA…AQDS). The interaction with MAP1A stretch occupies residues 1-288 (MQGAGSRGAW…SNRQPECGMV (288 aa)). 2 stretches are compositionally biased toward basic and acidic residues: residues 133-143 (GNDRRQSERLT) and 248-257 (GSDRPHGEPR). The span at 277 to 300 (TRSNRQPECGMVSSSDAGFSSQDA) shows a compositional bias: polar residues. The tract at residues 289-686 (SSSDAGFSSQ…LERVWKADLE (398 aa)) is interaction with TRAF3IP1. Positions 429–587 (RRTTAQDSLP…LLEAKMLALS (159 aa)) are required for localization to punctate cytoplasmic foci. Residues 435–846 (DSLPGLAVTR…STAGAQEAED (412 aa)) form a necessary and sufficient for interaction with PCNT and localization at the centrosome region. Residues 440 to 489 (LAVTRRDWLMREKEQLQKEIEALRARVSVLEAKEQRLSQELEDQEMLLRW) are a coiled coil. An interaction with ATF4 and ATF5 region spans residues 588-846 (GSCFSTAKEL…STAGAQEAED (259 aa)). An interaction with NDEL1 and PAFAH1B1 region spans residues 721–846 (TAALAVPRTP…STAGAQEAED (126 aa)). Residues 721–846 (TAALAVPRTP…STAGAQEAED (126 aa)) are interaction with PAFAH1B1. An interaction with NDEL1 region spans residues 795–828 (GHDEALFQSLQGELQMVKETLQTMFLQLQPAKEA).

As to quaternary structure, interacts with NDEL1. Interacts with CCDC88A (via C-terminus); the interaction is direct. Interacts with GSK3B. Interacts with tubulin alpha, ACTN2, ANKHD1, ATF4, ATF5, CEP63, EIF3S3, MAP1A, NDEL1, PAFAH1B1, RANBP9, SPTBN4, SYNE1 and TRAF3IP1. Interaction with microtubules may be mediated in part by TRAF3IP1. Interacts (via C-terminal) with PCNT. Interacts with CHCHD6. Interacts with CCDC141. Interacts with FBXW7, the substrate-recognition component of a SCF (SKP1-CUL1-F-box protein) E3 ubiquitin-protein ligase complex; the interaction targets DISC1 for proteasomal degradation. Interacts with ZNF365. Interacts with ATF4; inhibiting ATF4 transcription factor activity by disrupting ATF4 dimerization and DNA-binding. Interacts with PDE4B. Ubiquitinated. Ubiquitination with 'Lys-48'-linked polyubiquitin chains leads to its proteasomal degradation. Expressed in brain, heart, kidney, liver and thymus. Within the brain expression is high in the cerebral cortex, hippocampus and olfactory bulb and is also seen at lower levels in the cerebellum (at protein level).

Its subcellular location is the cytoplasm. It is found in the cytoskeleton. It localises to the mitochondrion. The protein localises to the microtubule organizing center. The protein resides in the centrosome. Its subcellular location is the postsynaptic density. Its function is as follows. Involved in the regulation of multiple aspects of embryonic and adult neurogenesis. Required for neural progenitor proliferation in the ventrical/subventrical zone during embryonic brain development and in the adult dentate gyrus of the hippocampus. Participates in the Wnt-mediated neural progenitor proliferation as a positive regulator by modulating GSK3B activity and CTNNB1 abundance. Plays a role as a modulator of the AKT-mTOR signaling pathway controlling the tempo of the process of newborn neurons integration during adult neurogenesis, including neuron positioning, dendritic development and synapse formation. Inhibits the activation of AKT-mTOR signaling upon interaction with CCDC88A. Regulates the migration of early-born granule cell precursors toward the dentate gyrus during the hippocampal development. Inhibits ATF4 transcription factor activity in neurons by disrupting ATF4 dimerization and DNA-binding. Plays a role, together with PCNT, in the microtubule network formation. The protein is Disrupted in schizophrenia 1 homolog of Rattus norvegicus (Rat).